Consider the following 300-residue polypeptide: uncharacterized protein (300 aa).

Positions 67–179 form a coiled coil; it reads LAFEELEKEK…IAKANELKDS (113 aa). The span at 203-285 shows a compositional bias: low complexity; it reads STTASLSQSE…PSSQSTYQQQ (83 aa). Positions 203–300 are disordered; the sequence is STTASLSQSE…KGFFARLFNL (98 aa).

This is an uncharacterized protein from Staphylococcus epidermidis (strain ATCC 12228 / FDA PCI 1200).